Consider the following 135-residue polypeptide: Ribosome-binding factor A (135 aa).

It belongs to the RbfA family. As to quaternary structure, monomer. Binds 30S ribosomal subunits, but not 50S ribosomal subunits or 70S ribosomes.

The protein resides in the cytoplasm. Its function is as follows. One of several proteins that assist in the late maturation steps of the functional core of the 30S ribosomal subunit. Associates with free 30S ribosomal subunits (but not with 30S subunits that are part of 70S ribosomes or polysomes). Required for efficient processing of 16S rRNA. May interact with the 5'-terminal helix region of 16S rRNA. This Bartonella quintana (strain Toulouse) (Rochalimaea quintana) protein is Ribosome-binding factor A.